The primary structure comprises 152 residues: Large ribosomal subunit protein uL13 (152 aa).

This sequence belongs to the universal ribosomal protein uL13 family. Part of the 50S ribosomal subunit.

This protein is one of the early assembly proteins of the 50S ribosomal subunit, although it is not seen to bind rRNA by itself. It is important during the early stages of 50S assembly. This Wolbachia pipientis subsp. Culex pipiens (strain wPip) protein is Large ribosomal subunit protein uL13.